Reading from the N-terminus, the 470-residue chain is Fumarate hydratase class II (470 aa).

Substrate-binding positions include Ser-99–Thr-101, His-129–Asp-132, Ser-139–Asn-141, and Thr-187. His-188 (proton donor/acceptor) is an active-site residue. The active site involves Ser-318. Residues Ser-319 and Lys-324–Asn-326 each bind substrate.

This sequence belongs to the class-II fumarase/aspartase family. Fumarase subfamily. In terms of assembly, homotetramer.

Its subcellular location is the cytoplasm. The enzyme catalyses (S)-malate = fumarate + H2O. It participates in carbohydrate metabolism; tricarboxylic acid cycle; (S)-malate from fumarate: step 1/1. Its function is as follows. Involved in the TCA cycle. Catalyzes the stereospecific interconversion of fumarate to L-malate. This chain is Fumarate hydratase class II, found in Halobacterium salinarum (strain ATCC 700922 / JCM 11081 / NRC-1) (Halobacterium halobium).